Here is a 406-residue protein sequence, read N- to C-terminus: Kelch domain-containing protein 2 (406 aa).

6 Kelch repeats span residues 31-85, 92-136, 148-207, 221-259, 271-311, and 322-359; these read ERSG…NTEG, SGSC…ERID, LGVW…IWSQ, HACA…NELI, HSLT…IKFN, and HTAC…IFSV.

In terms of assembly, component of a CRL2(KLHDC2) E3 ubiquitin-protein ligase complex, also named ECS(KLHDC2) complex, composed of CUL2, Elongin BC (ELOB and ELOC), RBX1 and substrate-specific adapter KLHDC2. May form oligomers as a KLHDC2-ELOB-ELOC complex; this interaction is autoinhibitory for the E3 ligase complex as the substrate-binding site of KLHDC2 is blocked in the oligomer. Interacts with CREB3; interaction is direct and specific as it does not interact with CREB1, ATF4, ATF6, JUN, FOS, CEBPA or herpes simplex virus transactivator VP16. Autoubiquitinated by the CRL2(KLHDC2) E3 ligase complex.

Its subcellular location is the nucleus. It participates in protein modification; protein ubiquitination. Its function is as follows. Substrate-recognition component of a Cul2-RING (CRL2) E3 ubiquitin-protein ligase complex of the DesCEND (destruction via C-end degrons) pathway, which recognizes a C-degron located at the extreme C terminus of target proteins, leading to their ubiquitination and degradation. The C-degron recognized by the DesCEND pathway is usually a motif of less than ten residues and can be present in full-length proteins, truncated proteins or proteolytically cleaved forms. The CRL2(KLHDC2) complex specifically recognizes proteins with a diglycine (Gly-Gly) at the C-terminus, leading to their ubiquitination and degradation. The CRL2(KLHDC2) complex mediates ubiquitination and degradation of truncated SELENOK and SELENOS selenoproteins produced by failed UGA/Sec decoding, which end with a diglycine. The CRL2(KLHDC2) complex also recognizes proteolytically cleaved proteins ending with Gly-Gly, such as the N-terminal fragment of USP1, leading to their degradation. May also act as an indirect repressor of CREB3-mediated transcription by interfering with CREB3-DNA-binding. The polypeptide is Kelch domain-containing protein 2 (Bos taurus (Bovine)).